The sequence spans 275 residues: Light-independent protochlorophyllide reductase iron-sulfur ATP-binding protein (275 aa).

ATP contacts are provided by residues 12–17 and Lys41; that span reads GIGKST. Ser16 lines the Mg(2+) pocket. Residues Cys97 and Cys131 each contribute to the [4Fe-4S] cluster site. An ATP-binding site is contributed by 182–183; sequence NR.

It belongs to the NifH/BchL/ChlL family. As to quaternary structure, homodimer. Protochlorophyllide reductase is composed of three subunits; BchL, BchN and BchB. The cofactor is [4Fe-4S] cluster.

It catalyses the reaction chlorophyllide a + oxidized 2[4Fe-4S]-[ferredoxin] + 2 ADP + 2 phosphate = protochlorophyllide a + reduced 2[4Fe-4S]-[ferredoxin] + 2 ATP + 2 H2O. It participates in porphyrin-containing compound metabolism; bacteriochlorophyll biosynthesis (light-independent). Functionally, component of the dark-operative protochlorophyllide reductase (DPOR) that uses Mg-ATP and reduced ferredoxin to reduce ring D of protochlorophyllide (Pchlide) to form chlorophyllide a (Chlide). This reaction is light-independent. The L component serves as a unique electron donor to the NB-component of the complex, and binds Mg-ATP. This chain is Light-independent protochlorophyllide reductase iron-sulfur ATP-binding protein, found in Chlorobium phaeovibrioides (strain DSM 265 / 1930) (Prosthecochloris vibrioformis (strain DSM 265)).